The primary structure comprises 247 residues: MRRLIAANWKMNKTVKETEEYINTFLKFVEHPESREILICPPFTSLYVAGKMLQGTGVKLGAQNCHYEKRGAFTGEISIPMLQEVGCEYVIVGHSERRHIFGESDELIHKKIVACLEMGIRPILCVGEKKEEREAGMTFKVIETQIKLALTGVEEHTDKIDIAYEPVWAIGTGTPATPEDAVEVHTFIRNLINQLNPKNEGKTRILYGGSVNPQNAKEFMKHEEINGLLVGTASLDPESFAKIVYSF.

A substrate-binding site is contributed by 8–10 (NWK). H94 acts as the Electrophile in catalysis. Catalysis depends on E165, which acts as the Proton acceptor. Substrate-binding residues include G171 and S210.

Belongs to the triosephosphate isomerase family. As to quaternary structure, homodimer.

The protein resides in the cytoplasm. It carries out the reaction D-glyceraldehyde 3-phosphate = dihydroxyacetone phosphate. It participates in carbohydrate biosynthesis; gluconeogenesis. The protein operates within carbohydrate degradation; glycolysis; D-glyceraldehyde 3-phosphate from glycerone phosphate: step 1/1. Involved in the gluconeogenesis. Catalyzes stereospecifically the conversion of dihydroxyacetone phosphate (DHAP) to D-glyceraldehyde-3-phosphate (G3P). The protein is Triosephosphate isomerase of Aquifex aeolicus (strain VF5).